The following is a 325-amino-acid chain: Geranylgeranyl transferase type-2 subunit beta (325 aa).

6 PFTB repeats span residues 9 to 50 (KEKH…CVLD), 57 to 99 (KEEV…ATYD), 109 to 150 (KVRL…SILG), 157 to 198 (VDPA…AIAN), 208 to 249 (LEEI…AIIG), and 256 to 298 (YEKL…SLMG). Geranylgeranyl diphosphate-binding positions include 183–185 (HAA) and 228–240 (RPSKLPDVCYSWW). D234, C236, and H286 together coordinate Zn(2+).

It belongs to the protein prenyltransferase subunit beta family. As to quaternary structure, heterodimer of an alpha and a beta subunit. The cofactor is Zn(2+).

The enzyme catalyses geranylgeranyl diphosphate + L-cysteinyl-[protein] = S-geranylgeranyl-L-cysteinyl-[protein] + diphosphate. Catalyzes the transfer of a geranyl-geranyl moiety from geranyl-geranyl pyrophosphate to proteins having the C-terminal -XCC or -XCXC, where both cysteines may become modified. Acts on YPT1 and SEC4. This chain is Geranylgeranyl transferase type-2 subunit beta (BET2), found in Saccharomyces cerevisiae (strain ATCC 204508 / S288c) (Baker's yeast).